The sequence spans 85 residues: Conotoxin Lt28.7 (85 aa).

The N-terminal stretch at 1–21 (MPKLEMMLLVLLILPLCYIDA) is a signal peptide. The propeptide occupies 22–40 (VGPPPPWNMEDEIIEHWQE).

Belongs to the conotoxin D superfamily. Contains 5 disulfide bonds. In terms of tissue distribution, expressed by the venom duct.

It is found in the secreted. Its function is as follows. Probable neurotoxin. The protein is Conotoxin Lt28.7 of Conus litteratus (Lettered cone).